The primary structure comprises 442 residues: Chromosomal replication initiator protein DnaA (442 aa).

A domain I, interacts with DnaA modulators region spans residues 1-75 (MDAWPRCLER…GNGEVALAVG (75 aa)). The tract at residues 75–104 (GSRPRAPEPLPAPQAVASAPAAAPIVPFAG) is domain II. The tract at residues 105–322 (NLDSHYTFAN…GALNTLVARA (218 aa)) is domain III, AAA+ region. ATP-binding residues include Gly-150, Gly-152, Lys-153, and Thr-154. Residues 323 to 442 (NFTGRSITVE…WEKLIRKLSE (120 aa)) form a domain IV, binds dsDNA region.

It belongs to the DnaA family. As to quaternary structure, oligomerizes as a right-handed, spiral filament on DNA at oriC.

The protein localises to the cytoplasm. In terms of biological role, plays an essential role in the initiation and regulation of chromosomal replication. ATP-DnaA binds to the origin of replication (oriC) to initiate formation of the DNA replication initiation complex once per cell cycle. Binds the DnaA box (a 9 base pair repeat at the origin) and separates the double-stranded (ds)DNA. Forms a right-handed helical filament on oriC DNA; dsDNA binds to the exterior of the filament while single-stranded (ss)DNA is stabiized in the filament's interior. The ATP-DnaA-oriC complex binds and stabilizes one strand of the AT-rich DNA unwinding element (DUE), permitting loading of DNA polymerase. After initiation quickly degrades to an ADP-DnaA complex that is not apt for DNA replication. Binds acidic phospholipids. The protein is Chromosomal replication initiator protein DnaA of Xanthomonas campestris pv. campestris (strain 8004).